Reading from the N-terminus, the 177-residue chain is Alpha-crystallin B chain (177 aa).

Met1 carries the N-acetylmethionine modification. The sHSP domain occupies 58–166 (RMPSWAQTGL…PERSVPISRD (109 aa)). 5 residues coordinate Zn(2+): His85, His106, Glu108, His113, and His121. The span at 155–169 (DVPERSVPISRDEKP) shows a compositional bias: basic and acidic residues. Residues 155 to 177 (DVPERSVPISRDEKPAVAGPQQK) are disordered.

This sequence belongs to the small heat shock protein (HSP20) family. Heteromer composed of three CRYAA and one CRYAB subunits. Aggregates with homologous proteins, including the small heat shock protein HSPB1, to form large heteromeric complexes. Inter-subunit bridging via zinc ions enhances stability, which is crucial as there is no protein turn over in the lens. Interacts with HSPBAP1 and TTN/titin.

Its function is as follows. May contribute to the transparency and refractive index of the lens. The protein is Alpha-crystallin B chain (CRYAB) of Squalus acanthias (Spiny dogfish).